Consider the following 445-residue polypeptide: Homogentisate 1,2-dioxygenase (445 aa).

Lysine 98 carries the post-translational modification N6-acetyllysine. Residues histidine 335, glutamate 341, and histidine 371 each coordinate Fe cation. Lysine 414 carries the N6-succinyllysine modification.

This sequence belongs to the homogentisate dioxygenase family. As to quaternary structure, homohexamer arranged as a dimer of trimers. Requires Fe cation as cofactor.

The catalysed reaction is homogentisate + O2 = 4-maleylacetoacetate + H(+). Its pathway is amino-acid degradation; L-phenylalanine degradation; acetoacetate and fumarate from L-phenylalanine: step 4/6. In terms of biological role, catalyzes the conversion of homogentisate to maleylacetoacetate. In Mus musculus (Mouse), this protein is Homogentisate 1,2-dioxygenase (Hgd).